The primary structure comprises 187 residues: Ribosome-recycling factor (187 aa).

This sequence belongs to the RRF family.

It is found in the cytoplasm. In terms of biological role, responsible for the release of ribosomes from messenger RNA at the termination of protein biosynthesis. May increase the efficiency of translation by recycling ribosomes from one round of translation to another. The sequence is that of Ribosome-recycling factor from Roseobacter denitrificans (strain ATCC 33942 / OCh 114) (Erythrobacter sp. (strain OCh 114)).